The following is a 313-amino-acid chain: L-2-hydroxycarboxylate dehydrogenase (NAD(P)(+)) (313 aa).

NADP(+) is bound by residues 7-13 (GASGRVG) and 34-37 (REHS). Substrate contacts are provided by arginine 86 and arginine 92. NADP(+)-binding positions include asparagine 99 and 121–123 (ITN). Residues asparagine 123 and arginine 154 each contribute to the substrate site. The Proton acceptor role is filled by histidine 178.

This sequence belongs to the LDH/MDH superfamily. In terms of assembly, homotetramer.

It is found in the cytoplasm. The catalysed reaction is a (2S)-2-hydroxycarboxylate + NAD(+) = a 2-oxocarboxylate + NADH + H(+). It catalyses the reaction a (2S)-2-hydroxycarboxylate + NADP(+) = a 2-oxocarboxylate + NADPH + H(+). Catalyzes the reversible oxidation of (S)-malate and (S)-sulfolactate to oxaloacetate and sulfopyruvate, respectively. Can use both NADH and NADPH, although activity is higher with NADPH. Oxidation of (S)-sulfolactate is observed only in the presence of NADP(+). Can also oxidize tartrate. Cannot reduce pyruvate, nor alpha-ketoglutarate. This Methanocaldococcus jannaschii (strain ATCC 43067 / DSM 2661 / JAL-1 / JCM 10045 / NBRC 100440) (Methanococcus jannaschii) protein is L-2-hydroxycarboxylate dehydrogenase (NAD(P)(+)) (mdh).